The sequence spans 385 residues: Guanine nucleotide-binding protein alpha-5 subunit (385 aa).

Gly-2 is lipidated: N-myristoyl glycine. Cys-6 carries S-palmitoyl cysteine lipidation. In terms of domain architecture, G-alpha spans 32 to 385 (RKIKMLLLGV…GKNYEDTNLE (354 aa)). The interval 35–48 (KMLLLGVTDSGKST) is G1 motif. GTP contacts are provided by residues 40 to 47 (GVTDSGKS), 174 to 180 (IHMRQTT), 199 to 203 (DVGGQ), 298 to 301 (NKKD), and Ala-357. Positions 47 and 180 each coordinate Mg(2+). The G2 motif stretch occupies residues 172-180 (DLIHMRQTT). A G3 motif region spans residues 195–204 (IRLIDVGGQK). Residues 294-301 (MLFLNKKD) form a G4 motif region. Residues 355-360 (TQATVT) are G5 motif.

Belongs to the G-alpha family. G proteins are composed of 3 units; alpha, beta and gamma. The alpha chain contains the guanine nucleotide binding site.

In terms of biological role, guanine nucleotide-binding proteins (G proteins) are involved as modulators or transducers in various transmembrane signaling systems. The polypeptide is Guanine nucleotide-binding protein alpha-5 subunit (gpa-5) (Caenorhabditis elegans).